The following is a 412-amino-acid chain: CCA-adding enzyme (412 aa).

Residues Gly-8 and Arg-11 each coordinate ATP. CTP-binding residues include Gly-8 and Arg-11. The Mg(2+) site is built by Asp-21 and Asp-23. Arg-91, Arg-137, and Arg-140 together coordinate ATP. Arg-91, Arg-137, and Arg-140 together coordinate CTP.

The protein belongs to the tRNA nucleotidyltransferase/poly(A) polymerase family. Bacterial CCA-adding enzyme type 2 subfamily. It depends on Mg(2+) as a cofactor.

It catalyses the reaction a tRNA precursor + 2 CTP + ATP = a tRNA with a 3' CCA end + 3 diphosphate. The catalysed reaction is a tRNA with a 3' CCA end + 2 CTP + ATP = a tRNA with a 3' CCACCA end + 3 diphosphate. Functionally, catalyzes the addition and repair of the essential 3'-terminal CCA sequence in tRNAs without using a nucleic acid template. Adds these three nucleotides in the order of C, C, and A to the tRNA nucleotide-73, using CTP and ATP as substrates and producing inorganic pyrophosphate. tRNA 3'-terminal CCA addition is required both for tRNA processing and repair. Also involved in tRNA surveillance by mediating tandem CCA addition to generate a CCACCA at the 3' terminus of unstable tRNAs. While stable tRNAs receive only 3'-terminal CCA, unstable tRNAs are marked with CCACCA and rapidly degraded. The polypeptide is CCA-adding enzyme (Buchnera aphidicola subsp. Schizaphis graminum (strain Sg)).